The primary structure comprises 150 residues: MIQKSFVMMKPDAVQRRLMGKILSRFEEKGLQIVAVKLMQIDEDLAKTHYGEHADKPFFGSLIEYITSSPSLAMVIEGEEAISTIRKLVGATNPLEADLGTIRGDFAMDTGRNIIHASDSPDSAEREINLFFNEDEICDYEIVDNKLIYE.

6 residues coordinate ATP: Lys10, Phe58, Arg86, Thr92, Arg103, and Asn113. The active-site Pros-phosphohistidine intermediate is His116.

Belongs to the NDK family. The cofactor is Mg(2+).

It localises to the cytoplasm. The catalysed reaction is a 2'-deoxyribonucleoside 5'-diphosphate + ATP = a 2'-deoxyribonucleoside 5'-triphosphate + ADP. It carries out the reaction a ribonucleoside 5'-diphosphate + ATP = a ribonucleoside 5'-triphosphate + ADP. Major role in the synthesis of nucleoside triphosphates other than ATP. The ATP gamma phosphate is transferred to the NDP beta phosphate via a ping-pong mechanism, using a phosphorylated active-site intermediate. This Methanobrevibacter smithii (strain ATCC 35061 / DSM 861 / OCM 144 / PS) protein is Nucleoside diphosphate kinase.